The sequence spans 52 residues: UPF0057 membrane protein At1g57550 (52 aa).

2 helical membrane passes run 4–24 (FLEV…RYGL) and 30–50 (VCLL…IYVL).

It belongs to the UPF0057 (PMP3) family.

It localises to the membrane. This is UPF0057 membrane protein At1g57550 from Arabidopsis thaliana (Mouse-ear cress).